Consider the following 388-residue polypeptide: Succinate--CoA ligase [ADP-forming] subunit beta (388 aa).

The 236-residue stretch at 9–244 folds into the ATP-grasp domain; the sequence is KAIFRSMGVA…LEEEDPKEIE (236 aa). ATP is bound by residues Lys-46, 53–55, Glu-99, Cys-102, and Glu-107; that span reads GRG. Mg(2+) contacts are provided by Asn-199 and Asp-213. Residues Asn-264 and 321 to 323 contribute to the substrate site; that span reads GIM.

It belongs to the succinate/malate CoA ligase beta subunit family. Heterotetramer of two alpha and two beta subunits. The cofactor is Mg(2+).

The catalysed reaction is succinate + ATP + CoA = succinyl-CoA + ADP + phosphate. It catalyses the reaction GTP + succinate + CoA = succinyl-CoA + GDP + phosphate. It participates in carbohydrate metabolism; tricarboxylic acid cycle; succinate from succinyl-CoA (ligase route): step 1/1. Functionally, succinyl-CoA synthetase functions in the citric acid cycle (TCA), coupling the hydrolysis of succinyl-CoA to the synthesis of either ATP or GTP and thus represents the only step of substrate-level phosphorylation in the TCA. The beta subunit provides nucleotide specificity of the enzyme and binds the substrate succinate, while the binding sites for coenzyme A and phosphate are found in the alpha subunit. The polypeptide is Succinate--CoA ligase [ADP-forming] subunit beta (Staphylococcus saprophyticus subsp. saprophyticus (strain ATCC 15305 / DSM 20229 / NCIMB 8711 / NCTC 7292 / S-41)).